A 156-amino-acid chain; its full sequence is Histone H2B.2 (156 aa).

Composition is skewed to basic and acidic residues over residues 1-10 (MAPKKDEKPA) and 24-58 (AKAE…GEKK). The interval 1–63 (MAPKKDEKPA…DGEKKDKKKK (63 aa)) is disordered. Lys-40 and Lys-41 each carry N6-acetyllysine. Lys-152 participates in a covalent cross-link: Glycyl lysine isopeptide (Lys-Gly) (interchain with G-Cter in ubiquitin).

The protein belongs to the histone H2B family. In terms of assembly, the nucleosome is a histone octamer containing two molecules each of H2A, H2B, H3 and H4 assembled in one H3-H4 heterotetramer and two H2A-H2B heterodimers. The octamer wraps approximately 147 bp of DNA. Post-translationally, the N-terminus is blocked. In terms of processing, can be acetylated to form H2BK33ac and H2BK34ac. Acetylated mainly on the ubiquitinated form. Monoubiquitinated to form H2BK143ub1; which is increased during the light period and may give a specific tag for epigenetic transcriptional activation.

It is found in the nucleus. Its subcellular location is the chromosome. Core component of nucleosome. Nucleosomes wrap and compact DNA into chromatin, limiting DNA accessibility to the cellular machineries which require DNA as a template. Histones thereby play a central role in transcription regulation, DNA repair, DNA replication and chromosomal stability. DNA accessibility is regulated via a complex set of post-translational modifications of histones, also called histone code, and nucleosome remodeling. This Chlamydomonas reinhardtii (Chlamydomonas smithii) protein is Histone H2B.2.